The following is a 450-amino-acid chain: ATP-dependent protease ATPase subunit HslU (450 aa).

ATP-binding positions include I18 and 60-65; that span reads GVGKTE. Polar residues predominate over residues 140-151; sequence KTSSSGWAQQQE. Residues 140 to 162 are disordered; sequence KTSSSGWAQQQEETPENDDQRGT. 3 residues coordinate ATP: D263, E328, and R400.

The protein belongs to the ClpX chaperone family. HslU subfamily. A double ring-shaped homohexamer of HslV is capped on each side by a ring-shaped HslU homohexamer. The assembly of the HslU/HslV complex is dependent on binding of ATP.

The protein localises to the cytoplasm. Its function is as follows. ATPase subunit of a proteasome-like degradation complex; this subunit has chaperone activity. The binding of ATP and its subsequent hydrolysis by HslU are essential for unfolding of protein substrates subsequently hydrolyzed by HslV. HslU recognizes the N-terminal part of its protein substrates and unfolds these before they are guided to HslV for hydrolysis. This chain is ATP-dependent protease ATPase subunit HslU, found in Idiomarina loihiensis (strain ATCC BAA-735 / DSM 15497 / L2-TR).